The sequence spans 313 residues: MGGRLPFNQSFWEEFLMGREGSLPNLPEISHVSKRVVRILGGNPGSMHLQGTNTYLVGTGRSRILIDTAQGLPAWIHRISSFLFTHNIELSYVLLTHWHGDHTGGVPDLIAHNPLLTNKIYKNNPDAGQNTITDGQIFSVNGATVRAVFTPGHSVDHMCFVLEEENALFTGDNVLGHGFSVAQDLGCYMDSLRNMSALACGLGYPAHGAIIENLPGKLDEYIQHREGRERMMLSTLTKELVQGQERRGEGTKGGLTLNEIVISIYGRLPQEVIEKALAPSLLQVLWKLTEDRRVGFKPGDPLKRQWFALISVE.

The Zn(2+) site is built by H97, H99, D101, and H102. The active-site Proton donor/acceptor is the D101.

The protein belongs to the metallo-beta-lactamase superfamily. It depends on Zn(2+) as a cofactor.

It functions in the pathway secondary metabolite biosynthesis. Lactamase-like protein; part of the gene cluster that mediates the biosynthesis of neosartoricin B, a prenylated anthracenone that probably exhibits T-cell antiproliferative activity, suggestive of a physiological role as an immunosuppressive agent. The non-reducing polyketide synthase nscA probably synthesizes and cyclizes the decaketide backbone. The hydrolase nscB then mediates the product release through hydrolysis followed by spontaneous decarboxylation. The prenyltransferase nscD catalyzes the addition of the dimethylallyl group to the aromatic C5. The FAD-dependent monooxygenase nscC is then responsible for the stereospecific hydroxylation at C2. Neosartoricin B can be converted into two additional compounds neosartoricins C and D. Neosartoricin C is a spirocyclic compound that is cyclized through the attack of C3 hydroxyl on C14, followed by dehydration. On the other hand, neosartoricin D is a further cyclized compound in which attack of C2 on C14 in neosartoricin C results in the formation of the acetal-containing dioxabicyclo-octanone ring. Both of these compounds are novel and possibly represent related metabolites of the gene cluster. The chain is Lactamase-like protein nscB from Arthroderma gypseum (strain ATCC MYA-4604 / CBS 118893) (Microsporum gypseum).